The primary structure comprises 315 residues: Mitochondrial glycine transporter (315 aa).

Solcar repeat units follow at residues 19-102 (SKTT…LRTG), 125-206 (TANL…LKRR), and 221-305 (KSSS…LILR). The next 6 helical transmembrane spans lie at 25-50 (FTAGLFSGLTSSILLQPADLLKTRVQ), 77-103 (GTLPSALRTGFGSALYFTSLNALRTGL), 128-153 (LATGAAARVAAGFVMMPVTVIKVRYE), 181-204 (GFGATAARDAPYAGLYVLFYEQLK), 225-251 (INFVSGGLAAGLATTITNPFDAVKTRL), and 280-298 (GLGLRITRKALSSALAWTV).

Belongs to the mitochondrial carrier (TC 2.A.29) family. SLC25A38 subfamily.

Its subcellular location is the mitochondrion inner membrane. It catalyses the reaction glycine(in) = glycine(out). Mitochondrial glycine transporter that imports glycine into the mitochondrial matrix. Plays an important role in providing glycine for the first enzymatic step in heme biosynthesis, the condensation of glycine with succinyl-CoA to produce 5-aminolevulinate (ALA) in the mitochondrial matrix. The protein is Mitochondrial glycine transporter of Aspergillus niger (strain ATCC MYA-4892 / CBS 513.88 / FGSC A1513).